Consider the following 161-residue polypeptide: Peptidyl-prolyl cis-trans isomerase (161 aa).

Positions 6–160 constitute a PPIase cyclophilin-type domain; it reads FFDIKAGDER…KKIIIEDCGE (155 aa).

This sequence belongs to the cyclophilin-type PPIase family. PPIase A subfamily. Found mainly in the tegument, gut epithelium, and muscle layers. Also found in the interior of the parasite.

It catalyses the reaction [protein]-peptidylproline (omega=180) = [protein]-peptidylproline (omega=0). Its activity is regulated as follows. Binds cyclosporin A (CsA). CsA mediates some of its effects via an inhibitory action on PPIase. Its function is as follows. PPIases accelerate the folding of proteins. It catalyzes the cis-trans isomerization of proline imidic peptide bonds in oligopeptides. This is Peptidyl-prolyl cis-trans isomerase from Schistosoma mansoni (Blood fluke).